A 347-amino-acid polypeptide reads, in one-letter code: MAELTEKDKAIQTAMGQIERQFGKGSIMKLGAREIQAVPIISTGSLALDKALGVGGFPRGRVIEIYGPESSGKTTLALHAVAEAQRQGGIAAFIDAEHALDVAYARRLGVNCDELLVSQPDTGEQALEIVDMLVRSGAVDIIIVDSVAALVPRAEIEGDMGDSHMGLQARLMSQALRKLTATIGKTHTTLIFINQIRMKIGVVYGNPETTTGGNALKFYASVRIEIRKATAIKDGENILGNRTKVKVVKNKLAPPFKSIEFDLMYGEGISKTGELLDMGVDMGIVDKSGAWYSYDGERIGQGRQNAKVFFTDNPEIFNQIQARVREALGLSSPTPKENGKEKGKAKP.

67–74 (GPESSGKT) serves as a coordination point for ATP. Residues 327–347 (ALGLSSPTPKENGKEKGKAKP) form a disordered region. A compositionally biased stretch (basic and acidic residues) spans 337 to 347 (ENGKEKGKAKP).

Belongs to the RecA family.

It is found in the cytoplasm. Functionally, can catalyze the hydrolysis of ATP in the presence of single-stranded DNA, the ATP-dependent uptake of single-stranded DNA by duplex DNA, and the ATP-dependent hybridization of homologous single-stranded DNAs. It interacts with LexA causing its activation and leading to its autocatalytic cleavage. The protein is Protein RecA of Desulforapulum autotrophicum (strain ATCC 43914 / DSM 3382 / VKM B-1955 / HRM2) (Desulfobacterium autotrophicum).